Consider the following 176-residue polypeptide: DNA-directed RNA polymerase II subunit 7 (176 aa).

The protein belongs to the eukaryotic RPB7/RPC8 RNA polymerase subunit family. Component of the RNA polymerase II complex consisting of at least 12 subunits. Interacts with NRPB4.

Its subcellular location is the nucleus. In terms of biological role, DNA-dependent RNA polymerase catalyzes the transcription of DNA into RNA using the four ribonucleoside triphosphates as substrates. Component of RNA polymerase II which synthesizes mRNA precursors and many functional non-coding RNAs. Pol II is the central component of the basal RNA polymerase II transcription machinery. It is composed of mobile elements that move relative to each other. NRPB7 is part of a subcomplex with NRPB4 that binds to a pocket formed by NRPB1, NRPB2 and NRPB6 at the base of the clamp element. The NRBP4-NRPB7 subcomplex seems to lock the clamp via NRPB7 in the closed conformation thus preventing double-stranded DNA to enter the active site cleft. The NRPB4-NRPB7 subcomplex binds single-stranded DNA and RNA. The sequence is that of DNA-directed RNA polymerase II subunit 7 (NRPB7) from Arabidopsis thaliana (Mouse-ear cress).